Consider the following 299-residue polypeptide: Ornithine carbamoyltransferase (299 aa).

Carbamoyl phosphate is bound by residues S52–T55, Q79, R103, and H130–Q133. L-ornithine is bound by residues N161, D218, and S222–M223. Residues C258–L259 and R286 contribute to the carbamoyl phosphate site.

This sequence belongs to the aspartate/ornithine carbamoyltransferase superfamily. OTCase family.

Its subcellular location is the cytoplasm. It carries out the reaction carbamoyl phosphate + L-ornithine = L-citrulline + phosphate + H(+). Its pathway is amino-acid biosynthesis; L-arginine biosynthesis; L-arginine from L-ornithine and carbamoyl phosphate: step 1/3. In terms of biological role, reversibly catalyzes the transfer of the carbamoyl group from carbamoyl phosphate (CP) to the N(epsilon) atom of ornithine (ORN) to produce L-citrulline. The polypeptide is Ornithine carbamoyltransferase (Ruthia magnifica subsp. Calyptogena magnifica).